The primary structure comprises 565 residues: Oxygen-dependent choline dehydrogenase (565 aa).

7–36 (DYIICGAGSAGNVLATRLTEDPGVTVLLLE) contacts FAD. The active-site Proton acceptor is His474.

Belongs to the GMC oxidoreductase family. FAD is required as a cofactor.

The enzyme catalyses choline + A = betaine aldehyde + AH2. The catalysed reaction is betaine aldehyde + NAD(+) + H2O = glycine betaine + NADH + 2 H(+). It participates in amine and polyamine biosynthesis; betaine biosynthesis via choline pathway; betaine aldehyde from choline (cytochrome c reductase route): step 1/1. Involved in the biosynthesis of the osmoprotectant glycine betaine. Catalyzes the oxidation of choline to betaine aldehyde and betaine aldehyde to glycine betaine at the same rate. This chain is Oxygen-dependent choline dehydrogenase, found in Burkholderia mallei (strain ATCC 23344).